Here is a 494-residue protein sequence, read N- to C-terminus: UPF0371 protein SP70585_0405 (494 aa).

The protein belongs to the UPF0371 family.

In Streptococcus pneumoniae (strain 70585), this protein is UPF0371 protein SP70585_0405.